Reading from the N-terminus, the 499-residue chain is Probable cytochrome P450 cyp-35D1 (499 aa).

Position 444 (C444) interacts with heme.

This sequence belongs to the cytochrome P450 family. Heme is required as a cofactor. As to expression, expressed in hypodermis, intestine and vulva upon thiabendazole (TBZ) exposure.

In terms of biological role, cytochromes P450 are a group of heme-thiolate monooxygenases. They oxidize a variety of structurally unrelated compounds, including steroids, fatty acids, and xenobiotics. Involved in the oxidative metabolism of thiabendazole (TBZ). Catalyzes the conversion of TBZ to its hydroxylated form. In Caenorhabditis elegans, this protein is Probable cytochrome P450 cyp-35D1.